The sequence spans 305 residues: MSRELAPLLLLLLSIHSALAMRICSFNVRSFGESKQEDKNAMDVIVKVIKRCDIILVMEIKDSNNRICPILMEKLNRNSRRGITYNYVISSRLGRNTYKEQYAFLYKEKLVSVKRSYHYHDYQDGDADVFSREPFVVWFQSPHTAVKDFVIIPLHTTPETSVKEIDELVEVYTDVKHRWKAENFIFMGDFNAGCSYVPKKAWKNIRLRTDPRFVWLIGDQEDTTVKKSTNCAYDRIVLRGQEIVSSVVPKSNSVFDFQKAYKLTEEEALDVSDHFPVEFKLQSSRAFTNSKKSVTLRKKTKSKRS.

The first 20 residues, 1-20, serve as a signal peptide directing secretion; the sequence is MSRELAPLLLLLLSIHSALA. Residues 35-51 carry the Bipartite nuclear localization signal motif; the sequence is KQEDKNAMDVIVKVIKR. Active-site residues include Glu100 and His155. The cysteines at positions 194 and 231 are disulfide-linked. The tract at residues 284 to 305 is not required for free DNA-nuclease activity but required for activity towards liposome-coated DNA; the sequence is SRAFTNSKKSVTLRKKTKSKRS. Positions 296–304 match the Nuclear localization signal motif; sequence LRKKTKSKR.

Belongs to the DNase I family. Ca(2+) is required as a cofactor. Mg(2+) serves as cofactor. Poly-ADP-ribosylated by PARP1. ADP-ribosylation negatively regulates enzymatic activity during apoptosis. As to expression, liver and spleen.

It localises to the nucleus. Its subcellular location is the endoplasmic reticulum. The protein localises to the secreted. Inhibited by zinc. In terms of biological role, has DNA hydrolytic activity. Is capable of both single- and double-stranded DNA cleavage, producing DNA fragments with 3'-OH ends. Can cleave chromatin to nucleosomal units and cleaves nucleosomal and liposome-coated DNA. Acts in internucleosomal DNA fragmentation (INDF) during apoptosis and necrosis. The role in apoptosis includes myogenic and neuronal differentiation, and BCR-mediated clonal deletion of self-reactive B cells. Is active on chromatin in apoptotic cell-derived membrane-coated microparticles and thus suppresses anti-DNA autoimmunity. Together with DNASE1, plays a key role in degrading neutrophil extracellular traps (NETs). NETs are mainly composed of DNA fibers and are released by neutrophils to bind pathogens during inflammation. Degradation of intravascular NETs by DNASE1 and DNASE1L3 is required to prevent formation of clots that obstruct blood vessels and cause organ damage following inflammation. This chain is Deoxyribonuclease gamma, found in Homo sapiens (Human).